The primary structure comprises 167 residues: Putative defense protein Hdd11-like (167 aa).

Positions 1–18 are cleaved as a signal peptide; sequence MMFTYVVAVASVVALTSA. In terms of domain architecture, Reelin spans 19–167; that stretch reads YPTGAPPSAC…ESAPVKVLSH (149 aa). C28 and C105 form a disulfide bridge.

The protein belongs to the insect defense protein family. As to expression, in larvae, high expression in the fat body and low expression in midgut, hemocytes and malpighian tubules. No expression in silkgland.

The protein localises to the secreted. Its function is as follows. May have antimicrobial activity. The protein is Putative defense protein Hdd11-like of Samia ricini (Indian eri silkmoth).